Reading from the N-terminus, the 214-residue chain is Phosphatidylserine decarboxylase proenzyme (214 aa).

Catalysis depends on S182, which acts as the Schiff-base intermediate with substrate; via pyruvic acid. S182 is subject to Pyruvic acid (Ser); by autocatalysis.

It belongs to the phosphatidylserine decarboxylase family. PSD-A subfamily. As to quaternary structure, heterodimer of a large membrane-associated beta subunit and a small pyruvoyl-containing alpha subunit. Requires pyruvate as cofactor. In terms of processing, is synthesized initially as an inactive proenzyme. Formation of the active enzyme involves a self-maturation process in which the active site pyruvoyl group is generated from an internal serine residue via an autocatalytic post-translational modification. Two non-identical subunits are generated from the proenzyme in this reaction, and the pyruvate is formed at the N-terminus of the alpha chain, which is derived from the carboxyl end of the proenzyme. The post-translation cleavage follows an unusual pathway, termed non-hydrolytic serinolysis, in which the side chain hydroxyl group of the serine supplies its oxygen atom to form the C-terminus of the beta chain, while the remainder of the serine residue undergoes an oxidative deamination to produce ammonia and the pyruvoyl prosthetic group on the alpha chain.

It localises to the cell membrane. It catalyses the reaction a 1,2-diacyl-sn-glycero-3-phospho-L-serine + H(+) = a 1,2-diacyl-sn-glycero-3-phosphoethanolamine + CO2. It functions in the pathway phospholipid metabolism; phosphatidylethanolamine biosynthesis; phosphatidylethanolamine from CDP-diacylglycerol: step 2/2. Functionally, catalyzes the formation of phosphatidylethanolamine (PtdEtn) from phosphatidylserine (PtdSer). The sequence is that of Phosphatidylserine decarboxylase proenzyme from Burkholderia multivorans (strain ATCC 17616 / 249).